A 455-amino-acid chain; its full sequence is Serine--tRNA ligase (455 aa).

252 to 254 (TAE) is an L-serine binding site. ATP contacts are provided by residues 283–285 (RKE) and valine 299. Position 306 (glutamate 306) interacts with L-serine. Residue 370–373 (EVVS) coordinates ATP. Residue threonine 406 coordinates L-serine.

It belongs to the class-II aminoacyl-tRNA synthetase family. Type-1 seryl-tRNA synthetase subfamily. As to quaternary structure, homodimer. The tRNA molecule binds across the dimer.

It localises to the cytoplasm. The enzyme catalyses tRNA(Ser) + L-serine + ATP = L-seryl-tRNA(Ser) + AMP + diphosphate + H(+). It carries out the reaction tRNA(Sec) + L-serine + ATP = L-seryl-tRNA(Sec) + AMP + diphosphate + H(+). Its pathway is aminoacyl-tRNA biosynthesis; selenocysteinyl-tRNA(Sec) biosynthesis; L-seryl-tRNA(Sec) from L-serine and tRNA(Sec): step 1/1. Its function is as follows. Catalyzes the attachment of serine to tRNA(Ser). Is also able to aminoacylate tRNA(Sec) with serine, to form the misacylated tRNA L-seryl-tRNA(Sec), which will be further converted into selenocysteinyl-tRNA(Sec). In Pyrococcus furiosus (strain ATCC 43587 / DSM 3638 / JCM 8422 / Vc1), this protein is Serine--tRNA ligase.